A 250-amino-acid polypeptide reads, in one-letter code: 1-(5-phosphoribosyl)-5-[(5-phosphoribosylamino)methylideneamino] imidazole-4-carboxamide isomerase (250 aa).

Residue D12 is the Proton acceptor of the active site. The active-site Proton donor is D134.

This sequence belongs to the HisA/HisF family.

It is found in the cytoplasm. The enzyme catalyses 1-(5-phospho-beta-D-ribosyl)-5-[(5-phospho-beta-D-ribosylamino)methylideneamino]imidazole-4-carboxamide = 5-[(5-phospho-1-deoxy-D-ribulos-1-ylimino)methylamino]-1-(5-phospho-beta-D-ribosyl)imidazole-4-carboxamide. It functions in the pathway amino-acid biosynthesis; L-histidine biosynthesis; L-histidine from 5-phospho-alpha-D-ribose 1-diphosphate: step 4/9. This chain is 1-(5-phosphoribosyl)-5-[(5-phosphoribosylamino)methylideneamino] imidazole-4-carboxamide isomerase, found in Actinobacillus pleuropneumoniae serotype 5b (strain L20).